The sequence spans 211 residues: Suppressor of RNA silencing p3 (211 aa).

It belongs to the tenuiviruses p3 protein family. In terms of assembly, homodimer.

Its subcellular location is the host cytoplasm. Its function is as follows. Acts as a suppressor of RNA-mediated gene silencing, also known as post-transcriptional gene silencing (PTGS), presumably through the binding of dsRNA. The protein is Suppressor of RNA silencing p3 of Avena sativa (Oat).